Here is a 610-residue protein sequence, read N- to C-terminus: Elongation factor 4 (610 aa).

In terms of domain architecture, tr-type G spans 14–196; that stretch reads NRIRNFSIIA…ALVANIPPPK (183 aa). GTP is bound by residues 26-31 and 143-146; these read DHGKST and NKID.

The protein belongs to the TRAFAC class translation factor GTPase superfamily. Classic translation factor GTPase family. LepA subfamily.

It localises to the cell inner membrane. It catalyses the reaction GTP + H2O = GDP + phosphate + H(+). Required for accurate and efficient protein synthesis under certain stress conditions. May act as a fidelity factor of the translation reaction, by catalyzing a one-codon backward translocation of tRNAs on improperly translocated ribosomes. Back-translocation proceeds from a post-translocation (POST) complex to a pre-translocation (PRE) complex, thus giving elongation factor G a second chance to translocate the tRNAs correctly. Binds to ribosomes in a GTP-dependent manner. The polypeptide is Elongation factor 4 (Legionella pneumophila (strain Lens)).